The chain runs to 95 residues: Small ribosomal subunit protein bS18 (95 aa).

The protein belongs to the bacterial ribosomal protein bS18 family. In terms of assembly, part of the 30S ribosomal subunit. Forms a tight heterodimer with protein bS6.

In terms of biological role, binds as a heterodimer with protein bS6 to the central domain of the 16S rRNA, where it helps stabilize the platform of the 30S subunit. In Ehrlichia canis (strain Jake), this protein is Small ribosomal subunit protein bS18.